Reading from the N-terminus, the 419-residue chain is ATP phosphoribosyltransferase regulatory subunit (419 aa).

It belongs to the class-II aminoacyl-tRNA synthetase family. HisZ subfamily. In terms of assembly, heteromultimer composed of HisG and HisZ subunits.

It is found in the cytoplasm. The protein operates within amino-acid biosynthesis; L-histidine biosynthesis; L-histidine from 5-phospho-alpha-D-ribose 1-diphosphate: step 1/9. Functionally, required for the first step of histidine biosynthesis. May allow the feedback regulation of ATP phosphoribosyltransferase activity by histidine. This chain is ATP phosphoribosyltransferase regulatory subunit, found in Ruminiclostridium cellulolyticum (strain ATCC 35319 / DSM 5812 / JCM 6584 / H10) (Clostridium cellulolyticum).